A 178-amino-acid polypeptide reads, in one-letter code: uncharacterized protein (178 aa).

This sequence to E.coli YrdD.

This is an uncharacterized protein from Haemophilus influenzae (strain ATCC 51907 / DSM 11121 / KW20 / Rd).